Consider the following 224-residue polypeptide: C-reactive protein (224 aa).

Residues 1–18 (MEKLLCFLVLTSLSHAFG) form the signal peptide. Gln-19 carries the pyrrolidone carboxylic acid modification. One can recognise a Pentraxin (PTX) domain in the interval 23 to 224 (SRKAFVFPKE…EVFTKPQLWP (202 aa)). A disulfide bridge links Cys-54 with Cys-115. Ca(2+)-binding residues include Asp-78, Asn-79, Glu-156, Gln-157, Asp-158, and Gln-168.

The protein belongs to the pentraxin family. As to quaternary structure, homopentamer. Pentraxin (or pentaxin) have a discoid arrangement of 5 non-covalently bound subunits. Interacts with FCN1; may regulate monocyte activation by FCN1. Ca(2+) is required as a cofactor. As to expression, found in plasma.

The protein localises to the secreted. Displays several functions associated with host defense: it promotes agglutination, bacterial capsular swelling, phagocytosis and complement fixation through its calcium-dependent binding to phosphorylcholine. Can interact with DNA and histones and may scavenge nuclear material released from damaged circulating cells. The sequence is that of C-reactive protein (CRP) from Homo sapiens (Human).